The chain runs to 988 residues: Transcription regulator srbA precursor (988 aa).

Residues 1-427 (MSTPGIGGDF…SSWHARAISH (427 aa)) lie on the Cytoplasmic side of the membrane. 2 disordered regions span residues 53 to 85 (AFPE…SDAM) and 108 to 169 (GDLN…KKRA). The span at 125–136 (SLSVHSNSPLSS) shows a compositional bias: low complexity. The segment at 165–178 (SKKRAHNVIEKRYR) is basic motif. A bHLH domain is found at 165 to 236 (SKKRAHNVIE…SKATEYIRHL (72 aa)). Positions 179–236 (ANLNEKIAELRDSVPSLRASYKQANGNSGDDDDDGVTSASKLNKASILSKATEYIRHL) are helix-loop-helix motif. Positions 226 to 260 (LSKATEYIRHLEIRNKRLEEENTALKIRLRQLDKA) form a coiled coil. Positions 267–291 (SAASVSSPSDCTVSTESGASSSPSV) are enriched in polar residues. Residues 267–313 (SAASVSSPSDCTVSTESGASSSPSVFSHAEDVPSDHSPTSSHPPEGL) are disordered. Over residues 301 to 310 (DHSPTSSHPP) the composition is skewed to low complexity. Residues 428–447 (FLMLAILVVGSAFIVFVYLF) traverse the membrane as a helical segment. Over 448-988 (NSDPRRQYSA…SDNLLLSDES (541 aa)) the chain is Lumenal. The segment covering 866-881 (PPSPMSKASDMLSSSS) has biased composition (low complexity). A disordered region spans residues 866-900 (PPSPMSKASDMLSSSSDDGEDGASQRNNNIIPHPM).

In low oxygen or sterol conditions, undergoes proteolytic cleavage by rhomboid-type protease rbdB and is released as soluble transcription factor from the membrane.

The protein localises to the endoplasmic reticulum membrane. It is found in the nucleus. Functionally, precursor of the transcription factor srbA, which is embedded in the endoplasmic reticulum membrane. Low oxygen or sterol conditions promote processing of this form, releasing the transcription factor form that translocates into the nucleus and activates transcription of genes required for adaptation to anaerobic growth. In terms of biological role, transcription factor that regulates sterol biosynthesis and hyphal morphology. Plays a critical role in ergosterol biosynthesis, resistance to the azole class of antifungal drugs, and in maintenance of cell polarity. Directly binds erg11A/cyp51A upstream DNA sequence at tandem repeats, called TR34 and TR46, that produce duplicated binding sites. Also mediates regulation of iron acquisition in response to hypoxia and low iron conditions via activation of extra- and intracellular siderophore production. Positively regulates the expression of the other hypoxia adaptation key transcription factor srbB. Required for the azole-sensing and response to azole stress. Binds the high-affinity sites 5'-A-T-C-G/A-T/G-A/G-C/T-G/C-A-T-3' of target promoters. Required for virulence in murine models of invasive pulmonary aspergillosis (IPA). In Aspergillus fumigatus (strain ATCC MYA-4609 / CBS 101355 / FGSC A1100 / Af293) (Neosartorya fumigata), this protein is Transcription regulator srbA precursor.